The chain runs to 1226 residues: Chromosome-associated kinesin KIF4 (1226 aa).

Residues 8 to 337 (PVRVALRCRP…LRYADRARKI (330 aa)) enclose the Kinesin motor domain. Position 87–94 (87–94 (GQTGSGKT)) interacts with ATP. A coiled-coil region spans residues 351 to 1006 (ELQRLKLQVQ…YKQKLALLHV (656 aa)). Over residues 494-505 (EAASFPVPEEDS) the composition is skewed to acidic residues. Disordered regions lie at residues 494 to 516 (EAASFPVPEEDSGEKRSSDGFTT), 722 to 741 (QRQKEAMEKRKDSQSKGMEG), and 1052 to 1078 (DLLSESESEEESDDKNWEPGNNSKQSK). A compositionally biased stretch (basic and acidic residues) spans 722–735 (QRQKEAMEKRKDSQ). The globular stretch occupies residues 1007-1226 (ASGKKLHNIL…SGCSAITEDE (220 aa)). Acidic residues predominate over residues 1053–1064 (LLSESESEEESD).

Belongs to the TRAFAC class myosin-kinesin ATPase superfamily. Kinesin family. Chromokinesin subfamily. It depends on [2Fe-2S] cluster as a cofactor. The cofactor is [4Fe-4S] cluster. In terms of tissue distribution, expressed in oocytes, eggs, testes and brain.

The protein localises to the nucleus. It is found in the chromosome. The protein resides in the cytoplasm. It localises to the cytoskeleton. In terms of biological role, iron-sulfur (Fe-S) cluster binding motor protein that has a role in chromosome segregation during mitosis. Required for mitotic chromosomal positioning and bipolar spindle stabilization. The chain is Chromosome-associated kinesin KIF4 (kif4) from Xenopus laevis (African clawed frog).